A 236-amino-acid polypeptide reads, in one-letter code: Leucyl/phenylalanyl-tRNA--protein transferase (236 aa).

It belongs to the L/F-transferase family.

The protein localises to the cytoplasm. The catalysed reaction is N-terminal L-lysyl-[protein] + L-leucyl-tRNA(Leu) = N-terminal L-leucyl-L-lysyl-[protein] + tRNA(Leu) + H(+). The enzyme catalyses N-terminal L-arginyl-[protein] + L-leucyl-tRNA(Leu) = N-terminal L-leucyl-L-arginyl-[protein] + tRNA(Leu) + H(+). It catalyses the reaction L-phenylalanyl-tRNA(Phe) + an N-terminal L-alpha-aminoacyl-[protein] = an N-terminal L-phenylalanyl-L-alpha-aminoacyl-[protein] + tRNA(Phe). Its function is as follows. Functions in the N-end rule pathway of protein degradation where it conjugates Leu, Phe and, less efficiently, Met from aminoacyl-tRNAs to the N-termini of proteins containing an N-terminal arginine or lysine. The protein is Leucyl/phenylalanyl-tRNA--protein transferase of Shewanella halifaxensis (strain HAW-EB4).